The sequence spans 99 residues: Large ribosomal subunit protein bL27 (99 aa).

The propeptide occupies 1–9 (MLIMNLQLF).

This sequence belongs to the bacterial ribosomal protein bL27 family. Post-translationally, the N-terminus is cleaved by ribosomal processing cysteine protease Prp.

This Clostridium botulinum (strain Eklund 17B / Type B) protein is Large ribosomal subunit protein bL27.